The following is a 282-amino-acid chain: Complement component 1 Q subcomponent-binding protein, mitochondrial (282 aa).

Residues 1–70 (MLPLLRCVPR…PRGPCACGCG (70 aa)) constitute a mitochondrion transit peptide. Residues 76-93 (TEGDKAFVDFLNDEIKEE) are C1q binding. K91 is modified (N6-acetyllysine). The interval 137–163 (NSIPPTFDGEEEPTQGQKVEEQEPELT) is disordered. The segment at 168-213 (FVVEVIKNDDGKKALVLDCHYPEDEVGQEDEAESDIFSIREVSFQS) is interaction with MAVS. Phosphotyrosine is present on Y188. Phosphoserine occurs at positions 201 and 205.

Belongs to the MAM33 family. In terms of assembly, homotrimer; three monomers form a donut-shaped structure with an unusually asymmetric charge distribution on the surface. Interacts with CDK13, HRK, VTN, NFYB, ADRA1B, FOXC1, DDX21, DDX50, NCL, SRSF1 and SRSF9. Interacts with CD93; the association may represent a cell surface C1q receptor. Interacts with KRT1; the association represents a cell surface kininogen receptor. Interacts with CD209; the interaction is indicative for a C1q:C1QBP:CD209 signaling complex. Interacts with FBL and RRP1; the respective interactions with C1QBP are competitive. Probably associates with the mitoribosome. Interacts with MAVS; the interaction occurs upon viral transfection. Interacts with PPIF. Interacts with U2AF1L4. Interacts with PLEKHN1. Interacts with VGF-derived peptide TLQP-21. Interacts with MRE11 and RAD50; forming the MRC (MRE11-RAD50-C1QBP) complex that inhibits the activity of MRE11. (Microbial infection) Interacts with Rubella virus capsid protein; the interaction occurs in mitochondria. As to quaternary structure, (Microbial infection) Interacts with L.monocytogenes InlB.

It is found in the mitochondrion matrix. It localises to the nucleus. The protein localises to the cell membrane. Its subcellular location is the secreted. The protein resides in the cytoplasm. It is found in the nucleolus. Functionally, multifunctional and multicompartmental protein involved in inflammation and infection processes, ribosome biogenesis, protein synthesis in mitochondria, regulation of apoptosis, transcriptional regulation and pre-mRNA splicing. At the cell surface is thought to act as an endothelial receptor for plasma proteins of the complement and kallikrein-kinin cascades. Putative receptor for C1q; specifically binds to the globular 'heads' of C1q thus inhibiting C1; may perform the receptor function through a complex with C1qR/CD93. In complex with cytokeratin-1/KRT1 is a high affinity receptor for kininogen-1/HMWK. Can also bind other plasma proteins, such as coagulation factor XII leading to its autoactivation. May function to bind initially fluid kininogen-1 to the cell membrane. The secreted form may enhance both extrinsic and intrinsic coagulation pathways. It is postulated that the cell surface form requires docking with transmembrane proteins for downstream signaling which might be specific for a cell-type or response. By acting as C1q receptor is involved in chemotaxis of immature dendritic cells and neutrophils and is proposed to signal through CD209/DC-SIGN on immature dendritic cells, through integrin alpha-4/beta-1 during trophoblast invasion of the decidua, and through integrin beta-1 during endothelial cell adhesion and spreading. Signaling involved in inhibition of innate immune response is implicating the PI3K-AKT/PKB pathway. Required for protein synthesis in mitochondria. In mitochondrial translation may be involved in formation of functional 55S mitoribosomes; the function seems to involve its RNA-binding activity. Acts as a RNA modification reader, which specifically recognizes and binds mitochondrial RNAs modified by C5-methylcytosine (m5C) in response to stress, and promotes recruitment of the mitochondrial degradosome complex, leading to their degradation. May be involved in the nucleolar ribosome maturation process; the function may involve the exchange of FBL for RRP1 in the association with pre-ribosome particles. Involved in regulation of RNA splicing by inhibiting the RNA-binding capacity of SRSF1 and its phosphorylation. Is required for the nuclear translocation of splicing factor U2AF1L4. Involved in regulation of CDKN2A- and HRK-mediated apoptosis. Stabilizes mitochondrial CDKN2A isoform smARF. May be involved in regulation of FOXC1 transcriptional activity and NFY/CCAAT-binding factor complex-mediated transcription. May play a role in antibacterial defense as it can bind to cell surface hyaluronan and inhibit Streptococcus pneumoniae hyaluronate lyase. May be involved in modulation of the immune response; ligation by HCV core protein is resulting in suppression of interleukin-12 production in monocyte-derived dendritic cells. Involved in regulation of antiviral response by inhibiting RIGI- and IFIH1-mediated signaling pathways probably involving its association with MAVS after viral infection. Acts as a regulator of DNA repair via homologous recombination by inhibiting the activity of MRE11: interacts with unphosphorylated MRE11 and RAD50 in absence of DNA damage, preventing formation and activity of the MRN complex. Following DNA damage, dissociates from phosphorylated MRE11, allowing formation of the MRN complex. Its function is as follows. (Microbial infection) During bacterial infection processes acts as an attachment site for microbial proteins, including Listeria monocytogenes internalin B (InlB). This chain is Complement component 1 Q subcomponent-binding protein, mitochondrial (C1QBP), found in Chlorocebus aethiops (Green monkey).